The following is a 571-amino-acid chain: Wee1-like protein kinase 1-A (571 aa).

Residues 1 to 101 (MSLQPVPHRL…PDCPGTPPHK (101 aa)) are disordered. Residues 81 to 98 (PASPPGPAASPPDCPGTP) are compositionally biased toward pro residues. The Protein kinase domain maps to 224–494 (FHELEKIGSG…SMALVKHSVL (271 aa)). ATP is bound by residues 230 to 238 (IGSGEFGSV) and lysine 253. Catalysis depends on aspartate 351, which acts as the Proton acceptor. Mg(2+) contacts are provided by asparagine 356 and aspartate 388. Positions 500–539 (KNAEQLRIELNAEKFKNALLQKELKKAQIAKAAAEERALF) form a coiled coil.

It belongs to the protein kinase superfamily. Ser/Thr protein kinase family. WEE1 subfamily. As to expression, zygotically expressed. Expressed in regions of the embryo that are devoid of mitotic cells, such as the involuting mesoderm.

The protein resides in the nucleus. It carries out the reaction L-tyrosyl-[protein] + ATP = O-phospho-L-tyrosyl-[protein] + ADP + H(+). Functionally, acts as a zygotic negative regulator of entry into mitosis (G2 to M transition) by protecting the nucleus from cytoplasmically activated cyclin B1-complexed cdk1 before the onset of mitosis by mediating phosphorylation of cdk1 on 'Tyr-15'. Specifically phosphorylates and inactivates cyclin B1-complexed cdk1 reaching a maximum during G2 phase and a minimum as cells enter M phase. Phosphorylation of cyclin B1-cdk1 occurs exclusively on 'Tyr-15' and phosphorylation of monomeric cdk1 does not occur. Involved in convergent extension of the paraxial mesoderm during neurulation by inhibiting the cell cycle. The protein is Wee1-like protein kinase 1-A (wee1-a) of Xenopus laevis (African clawed frog).